A 259-amino-acid chain; its full sequence is Synaptophysin-like protein 1 (259 aa).

At 1 to 33 (MAPNIYLVRQRISRLGQRMSGFQINLNPLKEPL) the chain is on the cytoplasmic side. One can recognise an MARVEL domain in the interval 28 to 237 (PLKEPLGFIK…NAWFVYKETS (210 aa)). The chain crosses the membrane as a helical span at residues 34 to 54 (GFIKVLEWIASIFAFATCGGF). The Vesicular portion of the chain corresponds to 55–116 (KGQTEIQVNC…LIGDYSSSAQ (62 aa)). N71 is a glycosylation site (N-linked (GlcNAc...) asparagine). The helical transmembrane segment at 117–137 (FYVTFAVFVFLYCIAALLLYV) threads the bilayer. Topologically, residues 138-150 (GYTSLYLDSRKLP) are cytoplasmic. A helical membrane pass occupies residues 151–171 (MIDFVVTLVATFLWLVSTSAW). The Vesicular portion of the chain corresponds to 172–212 (AKALTDIKIATGHNIIDELPPCKKKAVLCYFGSVTSMGSLN). N212 carries an N-linked (GlcNAc...) asparagine glycan. A helical transmembrane segment spans residues 213–233 (VSVIFGFLNMILWGGNAWFVY). Topologically, residues 234–259 (KETSLHSPSNTSAPHSQGGIPPPTGI) are cytoplasmic.

This sequence belongs to the synaptophysin/synaptobrevin family.

The protein resides in the cytoplasmic vesicle membrane. It localises to the melanosome. The sequence is that of Synaptophysin-like protein 1 (SYPL1) from Homo sapiens (Human).